Reading from the N-terminus, the 284-residue chain is Deoxyribonuclease-1 (284 aa).

Residues M1 to T22 form the signal peptide. N-linked (GlcNAc...) asparagine glycosylation is present at N40. The active site involves E100. Cysteines 123 and 126 form a disulfide. Residue N128 is glycosylated (N-linked (GlcNAc...) asparagine). The active site involves H156. Cysteines 195 and 231 form a disulfide.

This sequence belongs to the DNase I family. The cofactor is Ca(2+). Requires Mg(2+) as cofactor. N-glycosylated. Highly expressed in the parotid and submandibular gland as well as in the kidney and duodenum (at protein level). Expressed at intermediate level in the ileum, mesenterial lymph nodes, liver, ventral prostate, epididymis, ovary and stomach (at protein level). Expressed at low level in the sublingual, preputial, coagulation and pituitary gland (at protein level). Also present in the lachrymal and thyroid glands, striated muscle, intestine, the urinary bladder and the eye.

Its subcellular location is the secreted. The protein localises to the zymogen granule. It is found in the nucleus envelope. It carries out the reaction Endonucleolytic cleavage to 5'-phosphodinucleotide and 5'-phosphooligonucleotide end-products.. In terms of biological role, serum endocuclease secreted into body fluids by a wide variety of exocrine and endocrine organs. Expressed by non-hematopoietic tissues and preferentially cleaves protein-free DNA. Among other functions, seems to be involved in cell death by apoptosis. Binds specifically to G-actin and blocks actin polymerization. Together with DNASE1L3, plays a key role in degrading neutrophil extracellular traps (NETs). NETs are mainly composed of DNA fibers and are released by neutrophils to bind pathogens during inflammation. Degradation of intravascular NETs by DNASE1 and DNASE1L3 is required to prevent formation of clots that obstruct blood vessels and cause organ damage following inflammation. The sequence is that of Deoxyribonuclease-1 from Mus musculus (Mouse).